A 548-amino-acid chain; its full sequence is Chaperonin GroEL (548 aa).

ATP contacts are provided by residues 29-32 (TLGP), 86-90 (DGTTT), glycine 413, 476-478 (NAL), and aspartate 492. Residues 522–531 (PDEDDNDDGD) show a composition bias toward acidic residues. The disordered stretch occupies residues 522–548 (PDEDDNDDGDMGGGAPGMGGMGGMPGM). Positions 532–548 (MGGGAPGMGGMGGMPGM) are enriched in gly residues.

Belongs to the chaperonin (HSP60) family. Forms a cylinder of 14 subunits composed of two heptameric rings stacked back-to-back. Interacts with the co-chaperonin GroES.

It localises to the cytoplasm. It carries out the reaction ATP + H2O + a folded polypeptide = ADP + phosphate + an unfolded polypeptide.. In terms of biological role, together with its co-chaperonin GroES, plays an essential role in assisting protein folding. The GroEL-GroES system forms a nano-cage that allows encapsulation of the non-native substrate proteins and provides a physical environment optimized to promote and accelerate protein folding. The chain is Chaperonin GroEL from Natranaerobius thermophilus (strain ATCC BAA-1301 / DSM 18059 / JW/NM-WN-LF).